The sequence spans 230 residues: Bidirectional sugar transporter SWEET2b (230 aa).

Residues 1–6 (MDSLYD) lie on the Extracellular side of the membrane. A helical membrane pass occupies residues 7 to 27 (ISCFAAGLAGNIFALALFLSP). The MtN3/slv 1 domain occupies 13–98 (GLAGNIFALA…CLFIFYADSR (86 aa)). Over 28–45 (VTTFKRILKAKSTERFDG) the chain is Cytoplasmic. Residues 46 to 66 (LPYLFSLLNCLICLWYGLPWV) traverse the membrane as a helical segment. Over 67-72 (ADGRLL) the chain is Extracellular. A helical transmembrane segment spans residues 73 to 93 (VATVNGIGAVFQLAYICLFIF). The Cytoplasmic portion of the chain corresponds to 94–103 (YADSRKTRMK). The chain crosses the membrane as a helical span at residues 104 to 124 (IIGLLVLVVCGFALVSHASVF). The Extracellular segment spans residues 125–137 (FFDQPLRQQFVGA). In terms of domain architecture, MtN3/slv 2 spans 133–217 (QFVGAVSMAS…LALYAYYSRK (85 aa)). A helical transmembrane segment spans residues 138–158 (VSMASLISMFASPLAVMGVVI). Residues 159-167 (RSESVEFMP) lie on the Cytoplasmic side of the membrane. Residues 168-188 (FYLSLSTFLMSASFALYGLLL) form a helical membrane-spanning segment. Over 189 to 190 (RD) the chain is Extracellular. A helical membrane pass occupies residues 191-211 (FFIYFPNGLGLILGAMQLALY). Over 212 to 230 (AYYSRKWRGQDSSAPLLLA) the chain is Cytoplasmic.

It belongs to the SWEET sugar transporter family. Forms homooligomers and/or heterooligomers.

The protein localises to the cell membrane. Mediates both low-affinity uptake and efflux of sugar across the plasma membrane. The polypeptide is Bidirectional sugar transporter SWEET2b (SWEET2B) (Oryza sativa subsp. indica (Rice)).